Reading from the N-terminus, the 307-residue chain is UPF0276 protein PM0211 (307 aa).

It belongs to the UPF0276 family.

In Pasteurella multocida (strain Pm70), this protein is UPF0276 protein PM0211.